A 354-amino-acid polypeptide reads, in one-letter code: Biotin synthase (354 aa).

A Radical SAM core domain is found at 41–265; that stretch reads NEVQISRLLS…LMPHSRVRLS (225 aa). Positions 56, 60, and 63 each coordinate [4Fe-4S] cluster. [2Fe-2S] cluster contacts are provided by cysteine 100, cysteine 131, cysteine 191, and arginine 263.

Belongs to the radical SAM superfamily. Biotin synthase family. In terms of assembly, homodimer. [4Fe-4S] cluster serves as cofactor. [2Fe-2S] cluster is required as a cofactor.

It carries out the reaction (4R,5S)-dethiobiotin + (sulfur carrier)-SH + 2 reduced [2Fe-2S]-[ferredoxin] + 2 S-adenosyl-L-methionine = (sulfur carrier)-H + biotin + 2 5'-deoxyadenosine + 2 L-methionine + 2 oxidized [2Fe-2S]-[ferredoxin]. Its pathway is cofactor biosynthesis; biotin biosynthesis; biotin from 7,8-diaminononanoate: step 2/2. Catalyzes the conversion of dethiobiotin (DTB) to biotin by the insertion of a sulfur atom into dethiobiotin via a radical-based mechanism. In Shewanella woodyi (strain ATCC 51908 / MS32), this protein is Biotin synthase.